An 87-amino-acid polypeptide reads, in one-letter code: Glutaredoxin 1 (87 aa).

One can recognise a Glutaredoxin domain in the interval 1–87 (MFTVIFGRPG…WAKENLNLFA (87 aa)). A disulfide bond links C11 and C14.

The protein belongs to the glutaredoxin family. As to quaternary structure, monomer.

Functionally, the disulfide bond functions as an electron carrier in the glutathione-dependent synthesis of deoxyribonucleotides by the enzyme ribonucleotide reductase. In addition, it is also involved in reducing some disulfides in a coupled system with glutathione reductase. This Salmonella typhi protein is Glutaredoxin 1 (grxA).